Here is a 114-residue protein sequence, read N- to C-terminus: Lectin MVL (114 aa).

Repeat 1 spans residues 2 to 55 (ASYKVNIPAGPLWSNAEAQQVGPKIAAAHQGNFTGQWTTVVESAMSVVEVELQV). A carbohydrate is bound by residues 12 to 16 (PLWSN), Gln20, and 36 to 44 (GQWTTVVES). The tract at residues 56 to 60 (ENTGI) is linker. Repeat 2 spans residues 61 to 114 (HEFKTDVLAGPLWSNDEAQKLGPQIAASYGAEFTGQWRTIVEGVMSVIQIKYTF). A carbohydrate-binding positions include 71-75 (PLWSN), Gln79, and 95-103 (GQWRTIVEG).

Homodimer.

The protein localises to the cytoplasm. Functionally, carbohydrate-binding protein that binds oligomannosides such as Man(6)GlcNAc(2) with sub-micromolar affinities. The specificity of MVL is unique in that its minimal target comprises the Man-alpha-(1-&gt;6)-Man-beta-(1-&gt;4)-GlcNAc-beta-(1-&gt;4)-GlcNAc tetrasaccharide core (Man(2)A) found in N-linked oligomannosides. Displays hemagglutininating activity on rabbit, horse and hen erythrocytes. This activity is inhibited by yeast mannan. Does not bind mono- and disaccharides. Inhibits HIV-1 envelope-mediated cell fusion at nanomolar concentrations through carbohydrate-mediated interactions with high-mannose residues on the surface of the HIV envelope glycoprotein gp120. Unexpectedly for a lectin, one of the 2 oligomannose binding sites of MVL can catalyze the cleavage of chitin fragments (such as chitotriose, i.e. GlcNAc(3) or GlcNAc-beta-(1-&gt;4)-GlcNAcbeta-(1-&gt;4)-GlcNAc, and chitotetraose, i.e. GlcNAc(4)) to GlcNAc. This weak beta-1,4-glycosidase activity is restricted to the C-terminal carbohydrate-binding site. Does not cleave Man(3)GlcNAc(2) or the tetrasaccharide Man(2)A. This is Lectin MVL (mvl) from Microcystis viridis (Polycystis viridis).